The chain runs to 450 residues: MSWIQIPWSWVVTLIVTYLSLPLIIYYLVPYIFYGNKSSKKRIIIYVLGDIGHSPRMCYHARSFSEKGWQVELCGYVEEQVPGFIAEDPNIIVHALPTLTLQGNKRSIIFLVKKVLFQVSAIIAQLWELRGSNYMLIQNPPSIPILPIAVFYRLSGCKLIIDWHNLAYSIMQLKFNGNFYHPVVLASYVIEYIFGKFATYNLTVTEAMKEYLVNSFGLNPKRCVVLYDRPATQFKPLTESESRTKLLDSEFIRDMIPEGFNVEKGDKIIVTSTSFTPDEDISILIGALKIYDNSYENLDKSLPKILCFVTGKGPMKERYVKDVEEHDWQHVYVKFVWLKSEDYPRLLQLCDYGVSLHKSSSGLDLPMKILDMYGSGIPVIAYNYPVLGELVKYNENGLKFLDRRELHESLIFAMKDPELYKKLKQGALKESQIRWNSSWQSAMQELKLVA.

Residues 1 to 13 (MSWIQIPWSWVVT) lie on the Lumenal side of the membrane. The chain crosses the membrane as a helical span at residues 14–34 (LIVTYLSLPLIIYYLVPYIFY). The Cytoplasmic portion of the chain corresponds to 35 to 106 (GNKSSKKRII…PTLTLQGNKR (72 aa)). An intramembrane region (helical) is located at residues 107–127 (SIIFLVKKVLFQVSAIIAQLW). Over 128–450 (ELRGSNYMLI…SAMQELKLVA (323 aa)) the chain is Cytoplasmic.

It belongs to the glycosyltransferase group 1 family.

The protein resides in the endoplasmic reticulum membrane. The enzyme catalyses an N,N'-diacetylchitobiosyl-diphospho-di-trans,poly-cis-dolichol + GDP-alpha-D-mannose = a beta-D-Man-(1-&gt;4)-beta-D-GlcNAc-(1-&gt;4)-alpha-D-GlcNAc-diphospho-di-trans,poly-cis-dolichol + GDP + H(+). It functions in the pathway protein modification; protein glycosylation. Functionally, participates in the formation of the lipid-linked precursor oligosaccharide for N-glycosylation. Involved in assembling the dolichol-pyrophosphate-GlcNAc(2)-Man(5) intermediate on the cytoplasmic surface of the ER. This chain is Chitobiosyldiphosphodolichol beta-mannosyltransferase (ALG1), found in Candida glabrata (strain ATCC 2001 / BCRC 20586 / JCM 3761 / NBRC 0622 / NRRL Y-65 / CBS 138) (Yeast).